A 341-amino-acid chain; its full sequence is Krueppel-like factor 17 (341 aa).

The interval 214–252 (VTESNTQEEPFVREPPTPAPEGAESPSTSRGATRRQSPV) is disordered. The span at 238-252 (SPSTSRGATRRQSPV) shows a compositional bias: polar residues. 3 C2H2-type zinc fingers span residues 256–280 (YVCTYNSCGKSYTKRSHLVSHQRKH), 286–310 (FACDWNGCTWKFFRSDELGRHKRIH), and 316–338 (HKCDECDREFMRSDHLRQHKRTH).

This sequence belongs to the Sp1 C2H2-type zinc-finger protein family. As to expression, exclusively expressed in testis and ovary. Localized to step 3-8 spermatids in testis and growing oocytes in ovary.

It is found in the nucleus. In terms of biological role, transcription repressor that binds to the promoter of target genes and prevents their expression. Acts as a negative regulator of epithelial-mesenchymal transition and metastasis in breast cancer. Specifically binds the 5'-CACCC-3' sequence in the promoter of ID1, a key metastasis regulator in breast cancer, and repress its expression. May be a germ cell-specific transcription factor that plays important roles in spermatid differentiation and oocyte development. The protein is Krueppel-like factor 17 (Klf17) of Mus musculus (Mouse).